The following is a 185-amino-acid chain: MNQSEPGQTRRSVPVDQLINSLCATVPDYPKPGIIFKDLTPVFANGAALRAVVDALVEPFKGQFDAVAGVEARGFLLAAAAAYATDTGVITVRKAGKLPRKVISEDYALEYGTATLELHTADLPAGSRVLILDDVLATGGTLGAAARLFERCGVHVAGVGVVMELGELRGRSALTGHRVRSLLRL.

This sequence belongs to the purine/pyrimidine phosphoribosyltransferase family. As to quaternary structure, homodimer.

It is found in the cytoplasm. It catalyses the reaction AMP + diphosphate = 5-phospho-alpha-D-ribose 1-diphosphate + adenine. It participates in purine metabolism; AMP biosynthesis via salvage pathway; AMP from adenine: step 1/1. Functionally, catalyzes a salvage reaction resulting in the formation of AMP, that is energically less costly than de novo synthesis. The chain is Adenine phosphoribosyltransferase from Arthrobacter sp. (strain FB24).